Here is a 108-residue protein sequence, read N- to C-terminus: Nucleoid-associated protein BAV0915 (108 aa).

This sequence belongs to the YbaB/EbfC family. Homodimer.

The protein resides in the cytoplasm. It is found in the nucleoid. Its function is as follows. Binds to DNA and alters its conformation. May be involved in regulation of gene expression, nucleoid organization and DNA protection. The protein is Nucleoid-associated protein BAV0915 of Bordetella avium (strain 197N).